We begin with the raw amino-acid sequence, 104 residues long: Replication restart protein PriB (104 aa).

Residues 1-101 enclose the SSB domain; it reads MTNRLTLSGT…LHAEQIELID (101 aa).

Belongs to the PriB family. Homodimer. Interacts with PriA and DnaT. Component of the replication restart primosome. Primosome assembly occurs via a 'hand-off' mechanism. PriA binds to replication forks, subsequently PriB then DnaT bind; DnaT then displaces ssDNA to generate the helicase loading substrate.

In terms of biological role, involved in the restart of stalled replication forks, which reloads the replicative helicase on sites other than the origin of replication; the PriA-PriB pathway is the major replication restart pathway. During primosome assembly it facilitates complex formation between PriA and DnaT on DNA; stabilizes PriA on DNA. Stimulates the DNA unwinding activity of PriA helicase. This is Replication restart protein PriB from Salmonella typhi.